A 294-amino-acid chain; its full sequence is Lipoyl synthase 1 (294 aa).

[4Fe-4S] cluster-binding residues include C38, C43, C49, C64, C68, C71, and S279. In terms of domain architecture, Radical SAM core spans 50–268 (FAGGTATFLI…EEGQTRFGFL (219 aa)).

This sequence belongs to the radical SAM superfamily. Lipoyl synthase family. It depends on [4Fe-4S] cluster as a cofactor.

It localises to the cytoplasm. The enzyme catalyses [[Fe-S] cluster scaffold protein carrying a second [4Fe-4S](2+) cluster] + N(6)-octanoyl-L-lysyl-[protein] + 2 oxidized [2Fe-2S]-[ferredoxin] + 2 S-adenosyl-L-methionine + 4 H(+) = [[Fe-S] cluster scaffold protein] + N(6)-[(R)-dihydrolipoyl]-L-lysyl-[protein] + 4 Fe(3+) + 2 hydrogen sulfide + 2 5'-deoxyadenosine + 2 L-methionine + 2 reduced [2Fe-2S]-[ferredoxin]. It participates in protein modification; protein lipoylation via endogenous pathway; protein N(6)-(lipoyl)lysine from octanoyl-[acyl-carrier-protein]: step 2/2. Its function is as follows. Catalyzes the radical-mediated insertion of two sulfur atoms into the C-6 and C-8 positions of the octanoyl moiety bound to the lipoyl domains of lipoate-dependent enzymes, thereby converting the octanoylated domains into lipoylated derivatives. The chain is Lipoyl synthase 1 from Prochlorococcus marinus (strain SARG / CCMP1375 / SS120).